A 301-amino-acid polypeptide reads, in one-letter code: Transcriptional activator FeaR (301 aa).

In terms of domain architecture, HTH araC/xylS-type spans 199 to 299 (QKVVTLIDDN…GMTPGEYRRK (101 aa)). 2 consecutive DNA-binding regions (H-T-H motif) follow at residues 217-238 (EWIAGETGMSVRSLYRMFADKG) and 266-289 (LAGIGFHWGFSDQSHFSTVFKQRF).

In terms of biological role, positive regulator of tynA/maoA and feaB/padA, the genes for 2-phenylethylamine catabolism. The chain is Transcriptional activator FeaR (feaR) from Escherichia coli (strain K12).